A 500-amino-acid chain; its full sequence is Glucose-6-phosphate isomerase (500 aa).

The active-site Proton donor is the glutamate 332. Residues histidine 363 and lysine 473 contribute to the active site.

This sequence belongs to the GPI family.

It is found in the cytoplasm. The enzyme catalyses alpha-D-glucose 6-phosphate = beta-D-fructose 6-phosphate. The protein operates within carbohydrate biosynthesis; gluconeogenesis. It functions in the pathway carbohydrate degradation; glycolysis; D-glyceraldehyde 3-phosphate and glycerone phosphate from D-glucose: step 2/4. Functionally, catalyzes the reversible isomerization of glucose-6-phosphate to fructose-6-phosphate. In Rhizorhabdus wittichii (strain DSM 6014 / CCUG 31198 / JCM 15750 / NBRC 105917 / EY 4224 / RW1) (Sphingomonas wittichii), this protein is Glucose-6-phosphate isomerase.